A 307-amino-acid polypeptide reads, in one-letter code: Polysialic acid O-acetyltransferase (307 aa).

Basic and acidic residues predominate over residues 1 to 90; sequence MLRLKTQDSR…LKTQDSRLKT (90 aa). Positions 1 to 95 are disordered; that stretch reads MLRLKTQDSR…SRLKTQDSFS (95 aa). A run of 13 repeats spans residues 3-9, 10-16, 17-23, 24-30, 31-37, 38-44, 45-51, 52-58, 59-65, 66-72, 73-79, 80-86, and 87-93. Positions 3–93 are 13 X 7 AA tandem repeat of RLKTQDS encoded by a 7 nucleotide repeat; it reads RLKTQDSRLK…QDSRLKTQDS (91 aa). Residues 208–210, R237, K243, K261, and K278 contribute to the acetyl-CoA site; that span reads DGH.

It belongs to the transferase hexapeptide repeat family. As to quaternary structure, homotrimer. Hexamer formed by two homotrimers.

It carries out the reaction [N-acetyl-alpha-D-neuraminosyl-(2-&gt;8)](n) + n acetyl-CoA = [N,O(9)-diacetyl-alpha-D-neuraminosyl-(2-&gt;8)](n) + n CoA. It catalyses the reaction [N-acetyl-alpha-D-neuraminosyl-(2-&gt;8)](n) + n acetyl-CoA = [O(7),N-diacetyl-alpha-D-neuraminosyl-(2-&gt;8)](n) + n CoA. Functionally, catalyzes the O-acetylation of capsular polymeric sialic acid. Shows high substrate specificity toward polymers of sialic acid that contains a large number of residues. This chain is Polysialic acid O-acetyltransferase, found in Escherichia coli O1:K1 / APEC.